Here is a 311-residue protein sequence, read N- to C-terminus: Putative tenascin-XA (311 aa).

Disordered stretches follow at residues 1 to 47 (MEDK…EPRL) and 124 to 150 (LSAE…SQLS). Fibronectin type-III domains lie at 41 to 135 (PPEE…LAPA), 145 to 249 (RLSQ…SPRD), and 250 to 311 (LQFS…SCVH).

Expressed in the adrenal gland.

This chain is Putative tenascin-XA (TNXA), found in Homo sapiens (Human).